The following is a 341-amino-acid chain: 33 kDa chaperonin (341 aa).

2 cysteine pairs are disulfide-bonded: C245–C247 and C278–C281.

It belongs to the HSP33 family. Post-translationally, under oxidizing conditions two disulfide bonds are formed involving the reactive cysteines. Under reducing conditions zinc is bound to the reactive cysteines and the protein is inactive.

It localises to the cytoplasm. Redox regulated molecular chaperone. Protects both thermally unfolding and oxidatively damaged proteins from irreversible aggregation. Plays an important role in the bacterial defense system toward oxidative stress. This chain is 33 kDa chaperonin, found in Thermus thermophilus (strain ATCC 27634 / DSM 579 / HB8).